A 92-amino-acid chain; its full sequence is C-C motif chemokine 3 (92 aa).

A signal peptide spans 1–23; that stretch reads MKVSTTALAVLLCTMTLCNQVFS. Disulfide bonds link C34–C57 and C35–C73.

Belongs to the intercrine beta (chemokine CC) family. As to quaternary structure, self-associates. Also heterodimer of MIP-1-alpha(4-69) and MIP-1-beta(3-69). Interacts with CCR1. As to expression, expressed in lung, spleen, and pancreas.

The protein resides in the secreted. Functionally, monokine with inflammatory and chemokinetic properties. Binds to CCR1, CCR4 and CCR5. One of the major HIV-suppressive factors produced by CD8+ T-cells. Recombinant MIP-1-alpha induces a dose-dependent inhibition of different strains of HIV-1, HIV-2, and simian immunodeficiency virus (SIV). In Mus musculus (Mouse), this protein is C-C motif chemokine 3 (Ccl3).